The primary structure comprises 269 residues: Shikimate dehydrogenase (NADP(+)) (269 aa).

Shikimate contacts are provided by residues 17-19 and T64; that span reads SKS. K68 (proton acceptor) is an active-site residue. D80 provides a ligand contact to NADP(+). 2 residues coordinate shikimate: N89 and D105. NADP(+) contacts are provided by residues 130 to 134, 154 to 159, and M213; these read GAGGA and NRTRAK. Y215 contributes to the shikimate binding site. Residue G237 participates in NADP(+) binding.

It belongs to the shikimate dehydrogenase family. Homodimer.

The catalysed reaction is shikimate + NADP(+) = 3-dehydroshikimate + NADPH + H(+). Its pathway is metabolic intermediate biosynthesis; chorismate biosynthesis; chorismate from D-erythrose 4-phosphate and phosphoenolpyruvate: step 4/7. Its function is as follows. Involved in the biosynthesis of the chorismate, which leads to the biosynthesis of aromatic amino acids. Catalyzes the reversible NADPH linked reduction of 3-dehydroshikimate (DHSA) to yield shikimate (SA). In Neisseria gonorrhoeae (strain ATCC 700825 / FA 1090), this protein is Shikimate dehydrogenase (NADP(+)).